Here is a 351-residue protein sequence, read N- to C-terminus: Phosphoribosylformylglycinamidine cyclo-ligase (351 aa).

It belongs to the AIR synthase family.

It localises to the cytoplasm. The catalysed reaction is 2-formamido-N(1)-(5-O-phospho-beta-D-ribosyl)acetamidine + ATP = 5-amino-1-(5-phospho-beta-D-ribosyl)imidazole + ADP + phosphate + H(+). It functions in the pathway purine metabolism; IMP biosynthesis via de novo pathway; 5-amino-1-(5-phospho-D-ribosyl)imidazole from N(2)-formyl-N(1)-(5-phospho-D-ribosyl)glycinamide: step 2/2. In Synechococcus sp. (strain JA-3-3Ab) (Cyanobacteria bacterium Yellowstone A-Prime), this protein is Phosphoribosylformylglycinamidine cyclo-ligase.